We begin with the raw amino-acid sequence, 530 residues long: Phosphoenolpyruvate carboxykinase (ATP) (530 aa).

Positions 58, 195, and 201 each coordinate substrate. ATP is bound by residues Lys-201, His-220, and 236-244 (GLSGTGKTT). Mn(2+)-binding residues include Lys-201 and His-220. Asp-257 is a binding site for Mn(2+). Residues Glu-285, Arg-321, 440–441 (RI), and Thr-446 contribute to the ATP site. Arg-321 serves as a coordination point for substrate.

It belongs to the phosphoenolpyruvate carboxykinase (ATP) family. The cofactor is Mn(2+).

The protein resides in the cytoplasm. It carries out the reaction oxaloacetate + ATP = phosphoenolpyruvate + ADP + CO2. It functions in the pathway carbohydrate biosynthesis; gluconeogenesis. Its function is as follows. Involved in the gluconeogenesis. Catalyzes the conversion of oxaloacetate (OAA) to phosphoenolpyruvate (PEP) through direct phosphoryl transfer between the nucleoside triphosphate and OAA. The polypeptide is Phosphoenolpyruvate carboxykinase (ATP) (Staphylococcus epidermidis (strain ATCC 12228 / FDA PCI 1200)).